A 694-amino-acid chain; its full sequence is Polyribonucleotide nucleotidyltransferase (694 aa).

2 residues coordinate Mg(2+): aspartate 486 and aspartate 492. The region spanning proline 553–isoleucine 612 is the KH domain. The S1 motif domain maps to glycine 622–lysine 690.

This sequence belongs to the polyribonucleotide nucleotidyltransferase family. Mg(2+) serves as cofactor.

The protein resides in the cytoplasm. It catalyses the reaction RNA(n+1) + phosphate = RNA(n) + a ribonucleoside 5'-diphosphate. Involved in mRNA degradation. Catalyzes the phosphorolysis of single-stranded polyribonucleotides processively in the 3'- to 5'-direction. The chain is Polyribonucleotide nucleotidyltransferase from Chlamydia pneumoniae (Chlamydophila pneumoniae).